A 515-amino-acid polypeptide reads, in one-letter code: Monocarboxylate transporter 10 (515 aa).

Positions 1–48 (MVLSQEEPDSARGTSEAQPLGPAPTGAAPPPGPGPSDSPEAAVEKVEV) are disordered. Topologically, residues 1–66 (MVLSQEEPDS…EPHEPPEPPE (66 aa)) are cytoplasmic. Low complexity predominate over residues 17 to 26 (AQPLGPAPTG). Residues 27–36 (AAPPPGPGPS) show a composition bias toward pro residues. Residues 67–87 (GGWGWLVMLAAMWCNGSVFGI) form a helical membrane-spanning segment. Topologically, residues 88-114 (QNACGVLFVSMLETFGSKDDDKMVFKT) are extracellular. Residues 115 to 135 (AWVGSLSMGMIFFCCPIVSVF) form a helical membrane-spanning segment. The Cytoplasmic portion of the chain corresponds to 136–144 (TDLFGCRKT). A helical transmembrane segment spans residues 145–165 (AVVGAAVGFVGLMSSSFVSSI). Topologically, residues 166–171 (EPLYLT) are extracellular. A helical membrane pass occupies residues 172 to 192 (YGIIFACGCSFAYQPSLVILG). Residues 193–200 (HYFKKRLG) are Cytoplasmic-facing. A helical transmembrane segment spans residues 201-221 (LVNGIVTAGSSVFTILLPLLL). The Extracellular portion of the chain corresponds to 222-228 (RVLIDSV). Residues 229–249 (GLFYTLRVLCIFMFVLFLAGF) traverse the membrane as a helical segment. Residues 250 to 291 (TYRPLATSTKDKESGGSGSSLFSRKKFSPPKKIFNFAIFKVT) lie on the Cytoplasmic side of the membrane. Residue Ser263 is modified to Phosphoserine. A helical transmembrane segment spans residues 292-312 (AYAVWAVGIPLALFGYFVPYV). The Extracellular portion of the chain corresponds to 313–329 (HLMKHVNERFQDEKNKE). The helical transmembrane segment at 330–350 (VVLMCIGVTSGVGRLLFGRIA) threads the bilayer. A topological domain (cytoplasmic) is located at residue Asp351. A helical transmembrane segment spans residues 352–372 (YVPGVKKVYLQVLSFFFIGLM). Residues 373-396 (SMMIPLCSIFGALIAVCLIMGLFD) are Extracellular-facing. Residues 397-417 (GCFISIMAPIAFELVGAQDVS) traverse the membrane as a helical segment. Topologically, residues 418-419 (QA) are cytoplasmic. Residues 420 to 440 (IGFLLGFMSIPMTVGPPIAGL) form a helical membrane-spanning segment. Over 441-451 (LRDKLGSYDVA) the chain is Extracellular. Residues 452–472 (FYLAGVPPLIGGAVLCFIPWI) traverse the membrane as a helical segment. The Cytoplasmic portion of the chain corresponds to 473-515 (HSKKQREISKTTGKEKMEKMLENQNSLLSSSSGMFKKESDSII). Residues Ser498, Ser501, Ser503, and Ser504 each carry the phosphoserine modification.

The protein belongs to the major facilitator superfamily. Monocarboxylate porter (TC 2.A.1.13) family. In terms of processing, not N-glycosylated. In terms of tissue distribution, strongly expressed in kidney and skeletal muscle and at lower level in placenta and heart.

The protein resides in the cell membrane. Its subcellular location is the basolateral cell membrane. It carries out the reaction 3,3',5-triiodo-L-thyronine(out) = 3,3',5-triiodo-L-thyronine(in). The enzyme catalyses L-thyroxine(out) = L-thyroxine(in). It catalyses the reaction L-tryptophan(in) = L-tryptophan(out). The catalysed reaction is L-tyrosine(in) = L-tyrosine(out). It carries out the reaction L-phenylalanine(in) = L-phenylalanine(out). In terms of biological role, sodium- and proton-independent thyroid hormones and aromatic acids transporter. Mediates both uptake and efflux of 3,5,3'-triiodothyronine (T3) and 3,5,3',5'-tetraiodothyronine (T4) with high affinity, suggesting a role in the homeostasis of thyroid hormone levels. Responsible for low affinity bidirectional transport of the aromatic amino acids, such as phenylalanine, tyrosine, tryptophan and L-3,4-dihydroxyphenylalanine (L-dopa). Plays an important role in homeostasis of aromatic amino acids. This chain is Monocarboxylate transporter 10 (SLC16A10), found in Homo sapiens (Human).